A 1200-amino-acid polypeptide reads, in one-letter code: Ice nucleation protein (1200 aa).

The interval 176–1151 is octapeptide periodicity; the sequence is ATYGSTLSGD…LSAGEDSILI (976 aa).

The protein belongs to the bacterial ice nucleation protein family.

The protein resides in the cell outer membrane. Functionally, ice nucleation proteins enable bacteria to nucleate crystallization in supercooled water. The sequence is that of Ice nucleation protein (inaZ) from Pseudomonas syringae pv. syringae.